Here is a 249-residue protein sequence, read N- to C-terminus: Undecaprenyl-diphosphatase (249 aa).

Transmembrane regions (helical) follow at residues 11-31 (GLTE…TAIF), 35-55 (PDVG…LIFV), 80-100 (LVLS…FIES), 101-121 (VFSS…LMLL), 135-155 (IPYF…LPGI), 180-200 (FLMS…NVAF), 202-222 (TEQI…LYLV), and 226-246 (VIGG…FFVL).

It belongs to the UppP family.

The protein resides in the cell membrane. It carries out the reaction di-trans,octa-cis-undecaprenyl diphosphate + H2O = di-trans,octa-cis-undecaprenyl phosphate + phosphate + H(+). Functionally, catalyzes the dephosphorylation of undecaprenyl diphosphate (UPP). In Methanococcus maripaludis (strain C7 / ATCC BAA-1331), this protein is Undecaprenyl-diphosphatase.